We begin with the raw amino-acid sequence, 158 residues long: 6,7-dimethyl-8-ribityllumazine synthase (158 aa).

5-amino-6-(D-ribitylamino)uracil is bound by residues F23, 61-63 (SFE), and 85-87 (AVI). 90 to 91 (ET) lines the (2S)-2-hydroxy-3-oxobutyl phosphate pocket. H93 serves as the catalytic Proton donor. F118 provides a ligand contact to 5-amino-6-(D-ribitylamino)uracil. R132 is a binding site for (2S)-2-hydroxy-3-oxobutyl phosphate.

This sequence belongs to the DMRL synthase family.

It catalyses the reaction (2S)-2-hydroxy-3-oxobutyl phosphate + 5-amino-6-(D-ribitylamino)uracil = 6,7-dimethyl-8-(1-D-ribityl)lumazine + phosphate + 2 H2O + H(+). It participates in cofactor biosynthesis; riboflavin biosynthesis; riboflavin from 2-hydroxy-3-oxobutyl phosphate and 5-amino-6-(D-ribitylamino)uracil: step 1/2. Catalyzes the formation of 6,7-dimethyl-8-ribityllumazine by condensation of 5-amino-6-(D-ribitylamino)uracil with 3,4-dihydroxy-2-butanone 4-phosphate. This is the penultimate step in the biosynthesis of riboflavin. This Prochlorococcus marinus (strain MIT 9215) protein is 6,7-dimethyl-8-ribityllumazine synthase.